A 479-amino-acid chain; its full sequence is Anaerobic nitric oxide reductase flavorubredoxin (479 aa).

The zinc metallo-hydrolase stretch occupies residues 30-210 (LRGSSYNSYL…PFSRLVTPKI (181 aa)). The Fe cation site is built by His79, Glu81, Asp83, His147, Asp166, and His227. The region spanning 254–393 (ITIFYDTMSN…LCREHGREIA (140 aa)) is the Flavodoxin-like domain. FMN is bound by residues 260–264 (TMSNN) and 342–369 (AFGS…EMSL). The Rubredoxin-like domain occupies 423 to 474 (GPRMQCSVCQWIYDPAKGEPMQDVAPGTPWSEVPDNFLCPECSLGKDVFEEL). Cys428, Cys431, Cys461, and Cys464 together coordinate Fe cation.

In the N-terminal section; belongs to the zinc metallo-hydrolase group 3 family. As to quaternary structure, homotetramer. Fe cation serves as cofactor. The cofactor is FMN.

It is found in the cytoplasm. It participates in nitrogen metabolism; nitric oxide reduction. Anaerobic nitric oxide reductase; uses NADH to detoxify nitric oxide (NO), protecting several 4Fe-4S NO-sensitive enzymes. Has at least 2 reductase partners, only one of which (NorW, flavorubredoxin reductase) has been identified. NO probably binds to the di-iron center; electrons enter from the NorW at rubredoxin and are transferred sequentially to the FMN center and the di-iron center. Also able to function as an aerobic oxygen reductase. This Escherichia coli O139:H28 (strain E24377A / ETEC) protein is Anaerobic nitric oxide reductase flavorubredoxin.